The following is a 59-amino-acid chain: Large ribosomal subunit protein uL30 (59 aa).

The protein belongs to the universal ribosomal protein uL30 family. As to quaternary structure, part of the 50S ribosomal subunit.

This chain is Large ribosomal subunit protein uL30, found in Erwinia tasmaniensis (strain DSM 17950 / CFBP 7177 / CIP 109463 / NCPPB 4357 / Et1/99).